Reading from the N-terminus, the 255-residue chain is Small ribosomal subunit protein eS4 (255 aa).

In terms of domain architecture, S4 RNA-binding spans 43-115; sequence IPLLILVRDV…PTRFFTLHPI (73 aa).

It belongs to the eukaryotic ribosomal protein eS4 family.

This is Small ribosomal subunit protein eS4 from Hyperthermus butylicus (strain DSM 5456 / JCM 9403 / PLM1-5).